Consider the following 326-residue polypeptide: Target of rapamycin complex subunit lst8 (326 aa).

7 WD repeats span residues 1–37, 40–80, 83–122, 126–165, 168–207, 218–257, and 268–309; these read MNSN…CTRT, HQDS…PVIN, GVSK…LQCQ, QVNA…NEQL, ETDV…GEDL, AHKR…LMTE, and TSRG…REYS.

The protein belongs to the WD repeat LST8 family. As to quaternary structure, part of the mechanistic target of rapamycin complex 1 (mTORC1) which contains MTOR, MLST8 and RPTOR. Component of the mechanistic target of rapamycin complex 2 (mTORC2), consisting in two heterotretramers composed of MTOR, MLST8, RICTOR and MAPKAP1/SIN1.

Its subcellular location is the lysosome membrane. The protein localises to the cytoplasm. Its function is as follows. Subunit of both mTORC1 and mTORC2, which regulates cell growth and survival in response to nutrient and hormonal signals. mTORC1 is activated in response to growth factors or amino acids. In response to nutrients, mTORC1 is recruited to the lysosome membrane and promotes protein, lipid and nucleotide synthesis by phosphorylating several substrates, such as ribosomal protein S6 kinase (RPS6KB1 and RPS6KB2) and EIF4EBP1 (4E-BP1). In the same time, it inhibits catabolic pathways by phosphorylating the autophagy initiation components ULK1 and ATG13, as well as transcription factor TFEB, a master regulators of lysosomal biogenesis and autophagy. The mTORC1 complex is inhibited in response to starvation and amino acid depletion. Within mTORC1, MLST8 interacts directly with MTOR and enhances its kinase activity. In nutrient-poor conditions, stabilizes the MTOR-RPTOR interaction and favors RPTOR-mediated inhibition of MTOR activity. As part of the mTORC2 complex, transduces signals from growth factors to pathways involved in proliferation, cytoskeletal organization, lipogenesis and anabolic output. mTORC2 is also activated by growth factors, but seems to be nutrient-insensitive. In response to growth factors, mTORC2 phosphorylates and activates AGC protein kinase family members, including AKT (AKT1, AKT2 and AKT3), PKC (PRKCA, PRKCB and PRKCE) and SGK1. mTORC2 functions upstream of Rho GTPases to regulate the actin cytoskeleton, probably by activating one or more Rho-type guanine nucleotide exchange factors. mTORC2 promotes the serum-induced formation of stress-fibers or F-actin. Within mTORC2, MLST8 acts as a bridge between MAPKAP1/SIN1 and MTOR. The protein is Target of rapamycin complex subunit lst8 (mlst8) of Xenopus tropicalis (Western clawed frog).